Consider the following 172-residue polypeptide: Putative phosphoesterase BcerKBAB4_1135 (172 aa).

The Proton donor role is filled by H34. 2 short sequence motifs (HXTX) span residues 34–37 (HITL) and 115–118 (HLTI). H115 serves as the catalytic Proton acceptor.

The protein belongs to the 2H phosphoesterase superfamily. YjcG family.

The protein is Putative phosphoesterase BcerKBAB4_1135 of Bacillus mycoides (strain KBAB4) (Bacillus weihenstephanensis).